A 105-amino-acid chain; its full sequence is Phosphoribosyl-ATP pyrophosphatase (105 aa).

This sequence belongs to the PRA-PH family.

The protein localises to the cytoplasm. The catalysed reaction is 1-(5-phospho-beta-D-ribosyl)-ATP + H2O = 1-(5-phospho-beta-D-ribosyl)-5'-AMP + diphosphate + H(+). It functions in the pathway amino-acid biosynthesis; L-histidine biosynthesis; L-histidine from 5-phospho-alpha-D-ribose 1-diphosphate: step 2/9. The polypeptide is Phosphoribosyl-ATP pyrophosphatase (Vesicomyosocius okutanii subsp. Calyptogena okutanii (strain HA)).